A 2528-amino-acid polypeptide reads, in one-letter code: MLAQDVEFVDLPPPEATAGAATTDNETSSFNSNPVPTPSEASSIGPPHQLPVPVPDGDQPPLVEPMAICGMAMRLPGGIRDAEGFWDLLYNKRSGRCRVPKDRYNVENWFGPGKIGHVASEYGYFLDDVDLRNADASFWSMTKQEIEAMDPQQRLSLEVTYECLQNAGQRPEELRGRKIGVYLGTFEGDWLELDGRDPQHYHMYRLTGYGDYMSANRIHYEFGFMGPSVTIRTACSSSLTGLYDACHAISAGDCDSAIVACANIIYSPRTSITMQEQGVISPSGFCKTFDANADGYARGEAVSAVYVKKLSDAIRDGDPIRSVIRSTCINAGGKASTLTAPNTAAHETLIRRGHELAGVTDFSKTAMIECHGTGTAVGDPIETAAVANVFGEHGIYIGSVKTNLGHSEGASGLASIIKMTLALEHKIIPPNINFTTPNPKIPFERCKLKVPTEPLPWPKDRAELVGVNSFGIGGSNAHVLLGSAASFGIGSVQQKIIASEQSAEVAMTELTPRLLLFSAKHQQSLERMVANHQAYFLSHPESLDDMAYSLALKREELSHRSFCVTNGEDDWVPSRTHRTSGRAPPMLIFTFTGQGAQWAQMGKALIDQVPRFRRSIEKLDQVLQALPTPPRWKLIDEIRASKKKSRLSEAELSQPCCTAIQIALVDILEHYGIHPDAVIGHSSGEIGAAYASHAISGADAIQIAFYRGLVMCSLNPAERPGGMAAVGLGAEELTPYLRPGVRVGCENSPNSTTLTGDKVSLEETMKAIKEANPDVFVRALQVDRAYHSHHMETVAPEYVELLTNQRVQAMDPSVKFFSSVTGRQVDQSKELGPLYWAKNLVSPVRFSTAMEELVQSLIGPKVFLEIGPHSALAGPIRQILQHHKSTDEYFNTLTRGSDSHKDLLKAVGEMWLQNIPVNLTAVLGEGRFLPDLPLYPWHYEEPLWCESRLSKEWRLREFPHHDILGSRVLESTDQNPSWRNILRLDVVPWIKEHEVAGEIVFPGVGYICMAGEAIRQLTGETGFTARRVHIKAALVMHQGQDVEVITQLQRIPLTNAADSKWYNFTVHSYNKGIWVKHIFGQVCAGSDREHQAPSLESLPRQLSRRGWYRKMKEMGLEYGSRFMGLTDMTAHPIERKTIATVVNDIREGESKYAVHPVSLDCLLQAIVPATFNGLTRRFQHLGIPTYMEEIYVCPPLQPEMIIEACADEQPTAALSGSIIAVSNGHVTIDIRGLQMSAIGDAADASGQDPHAAVELEWREDINLISDAAKLIHPAKDRTDLHHLLDRFASASMMDTSTRLRGVEPTRSHLTHYQKWIESTADLIKLGKYPGLQPEDEIVEVSDAERVNIIESLYLSLLETDAAATATAIYRIWKECQGIFTGETDELELLLEGEVLHSLYDFMQNSEYRVFLELLAHRKPNLRVLEIGAGTGGTTATVLPALKSLYGERMYHSYTYTDISAGFFPQAKKRFENYPGLEFATLDISQDPLSQGFEAESFDLIIACNVLHATSTLQDTLTNVRRLLHPQGRLFLQELSPATKWINYVMGVLPGWWLGEQDGRYPEPYIGIDQWDALLSQSGFSGINLVSHDGYLNNNIVARPAADTQRQKRITLLHSCEDSASVTTSISQLLSSAGFGIDLYAIENANIPTPTQQDIVSILDLDRPFFHDLHESLFENLKGLLSQLRDTDSGILWVTRASQVGCKDPRYAMVNGVARVIRTELNIDFATLELEDFEQETLALIPQVLGEFQQRISEPNINTTTEWAVVGQKPLISRYHYIQVAEELKNNAVADSSTVKKLEQSRPGLVDTLCWKSMPISHALDENDVLVQVKCVGMNFKDVLISTGVITEKSSIGRGLGYEGSGLVLQVGSAVHKLSVGDRVIMSSSGSLTTTQQLDQRLCVKMPDSMTYEEGATMSAVYCTAIHCLLDVGGLRKGQSVLIHSASGGVGIAAMYIAQMVGAEVYATVGSEEKTQSLMSTFNIPRNRIFNSRTSEFLPRIMEETNGMGVDVVLNSLSGELLHASWKCTAEFGTFVEIGRRDFVGQGLLDMQPFEPNRSFVGFDLLLFSNKRPERIESIMTRAMDYYRAGFIQPIKPMTMFDAVSIVDAIRYMQRGQHIGKIVITMPENSTELSAEPPRQELALRQDRAYLFVGGLGGLGRSIATWLVEHGARHLVFLSRSAGNVPDDDPFVQELAVLGCTTTRISGDVSKLDDVLLAIRASGKPVGGVLQSSMVLRDNSFVDMNWDEWLGAVQPKVLGTWNLHNALLSEQPEEALDFFFLFSSAGAMSGQWGQANYNAGNTFLDAFVAYRHSLGLPASTVNIGVIQDIGYVSQNPEILDSLRSTAQYLMREPELLESIELMLHRSSPAESVVDHAVGRYVTRSQIGIGMRSTVPMDAPSNRTIWRKDPRMLVYRNLEVQSGPVSSSTGSDQVLTQFLREIGSNMTMLKAPETAELLAGEIGRTLFGFLMRADTEVVDLDAPLASVGIDSLISIELRNWIRRKIGVEVTVLEIVRADSVRDLGVLAQKKLAEK.

The disordered stretch occupies residues 1–53 (MLAQDVEFVDLPPPEATAGAATTDNETSSFNSNPVPTPSEASSIGPPHQLPVP). The span at 24–42 (DNETSSFNSNPVPTPSEAS) shows a compositional bias: polar residues. Residues 63-483 (VEPMAICGMA…GSNAHVLLGS (421 aa)) form the Ketosynthase family 3 (KS3) domain. Residues Cys-235, His-371, and His-406 each act as for beta-ketoacyl synthase activity in the active site. Positions 590-909 (TFTGQGAQWA…HKDLLKAVGE (320 aa)) are malonyl-CoA:ACP transacylase (MAT) domain. The tract at residues 961–1089 (HDILGSRVLE…GQVCAGSDRE (129 aa)) is N-terminal hotdog fold. The tract at residues 961-1230 (HDILGSRVLE…VSNGHVTIDI (270 aa)) is dehydratase (DH) domain. A PKS/mFAS DH domain is found at 961–1244 (HDILGSRVLE…MSAIGDAADA (284 aa)). Residue His-993 is the Proton acceptor; for dehydratase activity of the active site. Residues 1099-1244 (PRQLSRRGWY…MSAIGDAADA (146 aa)) are C-terminal hotdog fold. The Proton donor; for dehydratase activity role is filled by Asp-1160. The methyltransferase (CMet) domain stretch occupies residues 1409-1587 (VFLELLAHRK…GFSGINLVSH (179 aa)). An enoyl reductase (ER) (ER) domain region spans residues 1803 to 2119 (GLVDTLCWKS…RGQHIGKIVI (317 aa)). Residues 2143-2322 (RAYLFVGGLG…ASTVNIGVIQ (180 aa)) form a ketoreductase (KR) domain region. The region spanning 2447–2525 (ETAELLAGEI…DLGVLAQKKL (79 aa)) is the Carrier domain. At Ser-2485 the chain carries O-(pantetheine 4'-phosphoryl)serine.

It carries out the reaction 9 malonyl-CoA + acetyl-CoA + S-adenosyl-L-methionine + 13 NADPH + 20 H(+) = soppiline A + S-adenosyl-L-homocysteine + 9 CO2 + 13 NADP(+) + 10 CoA + 7 H2O. It participates in secondary metabolite biosynthesis. Functionally, highly reducing polyketide synthase; part of the gene cluster that mediates the biosynthesis of the alkylresorcinols called soppilines. The biosynthesis starts with the HR-PKS pspA-catalyzed carbon chain assembly through nine chain elongation cycles, using acetyl CoA and malonyl CoA as a starter and extender units, respectively, to produce the polyketide soppiline A. In the first round, the KR, DH, and CMeT domains work to produce 2-methyl-2-butenyl thioester. In rounds 2 to 5, the KR, DH, and ER domains fully catalyze the reduction of the elongated beta-ketothioester, resulting in the insertion of eight methylene units. The unusual Z,E,Z-triene motif is likely constructed during rounds 6 to 8. Typically, the DH domain introduces a double bond at an alpha,beta-position of an elongated polyketide chain, with the dehydration of a beta-hydroxy group. The last extension cycle would be carried out with L-oriented beta-ketoreduction by the KR domain to produce beta-hydroxy carboxylic acid soppiline A. The type III PKS pspB intercepts the elongated polyketide chain at round 8 from the HR-PKS pspA, followed by a tri-keto extension and decarboxylative aldol cyclization to produce 1,3,5-trisubstituted alkylresorcinol soppiline B. Subsequently, the cytochrome P450 monooxygenase pspC catalyzes three-step oxidations at the C-4 methyl group to carboxylic acid to yield soppiline C. This is Highly reducing polyketide synthase pspA from Penicillium soppii.